We begin with the raw amino-acid sequence, 109 residues long: Probable glutaredoxin slr1562 (109 aa).

Residues 11–109 enclose the Glutaredoxin domain; sequence LSGRQADGIK…PLLATPPNPA (99 aa). An intrachain disulfide couples Cys-31 to Cys-34.

Belongs to the glutaredoxin family.

Has a glutathione-disulfide oxidoreductase activity in the presence of NADPH and glutathione reductase. Reduces low molecular weight disulfides and proteins. This is Probable glutaredoxin slr1562 from Synechocystis sp. (strain ATCC 27184 / PCC 6803 / Kazusa).